The sequence spans 160 residues: MSEVNKVSVSCEGFCPPPWIGQVAPFVCAVLDSQAISHWDLSIVCCTDAFIRRLNYDYRGIDSPTDVLSFENDGEYCDDAGTRFFLAGDIIISLESVRENSERFHVAAHEEFKRVLIHGILHLSGMDHQDNSPGQEMLRLQERILAQHCRVLSSGIPWES.

Residues H118, H122, and H128 each contribute to the Zn(2+) site.

Belongs to the endoribonuclease YbeY family. Zn(2+) serves as cofactor.

Its subcellular location is the cytoplasm. Functionally, single strand-specific metallo-endoribonuclease involved in late-stage 70S ribosome quality control and in maturation of the 3' terminus of the 16S rRNA. This chain is Endoribonuclease YbeY, found in Treponema pallidum (strain Nichols).